A 332-amino-acid chain; its full sequence is MHLCHAITNISHRNSDWSREVQASLYSLMSLIILATLVGNLIVIISISHFKQLHTPTNWLLHSMAIVDFLLGCLIMPCSMVRTVERCWYFGEILCKVHTSTDIMLSSASIFHLAFISIDRYCAVCDPLRYKAKINISTILVMILVSWSLPAVYAFGMIFLELNLKGVEELYRSQVSDLGGCSPFFSKVSGVLAFMTSFYIPGSVMLFVYYRIYFIAKGQARSINRTNVQVGLEGKSQAPQSKETKAAKTLGIMVGVFLVCWCPFFLCTVLDPFLGYVIPPSLNDALYWFGYLNSALNPMVYAFFYPWFRRALKMVLLGKIFQKDSSRSKLFL.

Over 1–23 (MHLCHAITNISHRNSDWSREVQA) the chain is Extracellular. Residue asparagine 9 is glycosylated (N-linked (GlcNAc...) asparagine). The chain crosses the membrane as a helical span at residues 24–48 (SLYSLMSLIILATLVGNLIVIISIS). The Cytoplasmic segment spans residues 49 to 58 (HFKQLHTPTN). The helical transmembrane segment at 59 to 80 (WLLHSMAIVDFLLGCLIMPCSM) threads the bilayer. Over 81–95 (VRTVERCWYFGEILC) the chain is Extracellular. Cysteine 95 and cysteine 181 are disulfide-bonded. A helical membrane pass occupies residues 96 to 118 (KVHTSTDIMLSSASIFHLAFISI). Position 102 (aspartate 102) interacts with 2-phenylethylamine. At 119–138 (DRYCAVCDPLRYKAKINIST) the chain is on the cytoplasmic side. The chain crosses the membrane as a helical span at residues 139–160 (ILVMILVSWSLPAVYAFGMIFL). Over 161-187 (ELNLKGVEELYRSQVSDLGGCSPFFSK) the chain is Extracellular. The tract at residues 174-185 (QVSDLGGCSPFF) is extracellular Loop 2 (ECL2). Residues 188–210 (VSGVLAFMTSFYIPGSVMLFVYY) traverse the membrane as a helical segment. Topologically, residues 211–246 (RIYFIAKGQARSINRTNVQVGLEGKSQAPQSKETKA) are cytoplasmic. The helical transmembrane segment at 247–270 (AKTLGIMVGVFLVCWCPFFLCTVL) threads the bilayer. At 271 to 283 (DPFLGYVIPPSLN) the chain is on the extracellular side. A helical membrane pass occupies residues 284 to 304 (DALYWFGYLNSALNPMVYAFF). Over 305–332 (YPWFRRALKMVLLGKIFQKDSSRSKLFL) the chain is Cytoplasmic.

The protein belongs to the G-protein coupled receptor 1 family. Widely distributed throughout the brain. Strongly expressed in the mitral cell layer of the olfactory bulb, piriform cortex, the arcuate, motor, and mesencephalic trigeminal nuclei, lateral reticular and hypoglossal nuclei, cerebellar Purkinje cells, and ventral horn of the spinal cord. Moderately expressed in the frontal, entorhinal, and agranular cortices, the ventral pallidum, thalamus, hippocampus, several hypothalamic nuclei, ambiguus, dorsal raphe, and gigantocellular reticular nuclei. Weakly expressed in the septum, basal ganglia, amygdala, myelencephalon, and spinal cord dorsal horn. Particularly interesting is the moderate expression in several monoaminergic cell groups, namely the dorsal raphe, the locus coeruleus, and the ventral tegmental area.

It is found in the endomembrane system. The protein resides in the endoplasmic reticulum membrane. It localises to the cell membrane. Its activity is regulated as follows. Activated by SEP-363856 small molecule: IHCH-7179 acts both as an agonist activator for HTR1A and TAAR1. In terms of biological role, intracellular G-protein coupled receptor for trace amines, which recognizes endogenous amine-containing metabolites such as beta-phenylethylamine (beta-PEA), 3-iodothyronamine (T1AM), isoamylamine (IAA), cadaverine (CAD), cyclohexylamine (CHA), p-tyramine (p-TYR), trimethylamine (TMA), octopamine and tryptamine. Also functions as a receptor for various drugs and psychoactive substances, such as amphetamine and methamphetamine. Unresponsive to classical biogenic amines, such as epinephrine and histamine and only partially activated by dopamine and serotonin. Expressed in both the central and peripheral nervous system: TAAR1 activation regulates the activity of several neurotransmitter signaling pathways by (1) decreasing the basal firing rates of the neurons involved and by (2) lowering the sensitivity of receptors to neurotransmitters. Ligand binding causes a conformation change that triggers signaling via guanine nucleotide-binding proteins (G proteins) and modulates the activity of downstream effectors. TAAR1 is coupled with different G(i)/G(o)-, G(s)- or G(q)/G(11) classes of G alpha proteins depending on the ligand. CAD-binding is coupled to G(i)/G(o) G alpha proteins and mediates inhibition of adenylate cyclase activity. T1AM- or beta-PEA-binding is coupled to G(s) G alpha proteins and mediates activation of adenylate cyclase activity. CHA- or IAA-binding is coupled to G(q)/G(11) G alpha proteins and activates phospholipase C-beta, releasing diacylglycerol (DAG) and inositol 1,4,5-trisphosphate (IP3) second messengers. TMA-binding is coupled with all three G(i)/G(o)-, G(s)- or G(q)/G(11) G alpha protein subtypes. This Mus musculus (Mouse) protein is Trace amine-associated receptor 1.